The following is a 173-amino-acid chain: RNA pyrophosphohydrolase (173 aa).

The region spanning 11–164 (PYRKCVGIVV…KKHVYMKVVS (154 aa)) is the Nudix hydrolase domain. Residues 52 to 73 (GGIDEDEKPLDAAYRELYEETG) carry the Nudix box motif.

Belongs to the Nudix hydrolase family. RppH subfamily. A divalent metal cation is required as a cofactor.

In terms of biological role, accelerates the degradation of transcripts by removing pyrophosphate from the 5'-end of triphosphorylated RNA, leading to a more labile monophosphorylated state that can stimulate subsequent ribonuclease cleavage. The protein is RNA pyrophosphohydrolase of Bartonella tribocorum (strain CIP 105476 / IBS 506).